Here is a 530-residue protein sequence, read N- to C-terminus: Chitin synthase 1 (530 aa).

A glycan (N-linked (GlcNAc...) asparagine) is linked at Asn-17. Residues 22 to 94 (QESSSNLIQQ…QANNNRKVTR (73 aa)) form a disordered region. Residues 24 to 56 (SSSNLIQQQQPGTNYARNQQTLSSLRSQKQQAE) are compositionally biased toward polar residues. 3 N-linked (GlcNAc...) asparagine glycosylation sites follow: Asn-118, Asn-310, and Asn-474. 2 helical membrane passes run 477–497 (FFAG…GHGF) and 508–528 (IYNV…LSFL).

This sequence belongs to the chitin synthase family. Class II subfamily.

Its subcellular location is the cell membrane. The catalysed reaction is [(1-&gt;4)-N-acetyl-beta-D-glucosaminyl](n) + UDP-N-acetyl-alpha-D-glucosamine = [(1-&gt;4)-N-acetyl-beta-D-glucosaminyl](n+1) + UDP + H(+). Functionally, polymerizes chitin, a structural polymer of the cell wall and septum, by transferring the sugar moiety of UDP-GlcNAc to the non-reducing end of the growing chitin polymer. The protein is Chitin synthase 1 of Rhizopus delemar (strain RA 99-880 / ATCC MYA-4621 / FGSC 9543 / NRRL 43880) (Mucormycosis agent).